Consider the following 491-residue polypeptide: Protein nucleotidyltransferase YdiU (491 aa).

ATP-binding residues include Gly-88, Gly-90, Arg-91, Lys-111, Asp-123, Gly-124, Arg-174, and Arg-181. Asp-250 acts as the Proton acceptor in catalysis. 2 residues coordinate Mg(2+): Asn-251 and Asp-260. Asp-260 contacts ATP.

Belongs to the SELO family. Mg(2+) serves as cofactor. Requires Mn(2+) as cofactor.

It catalyses the reaction L-seryl-[protein] + ATP = 3-O-(5'-adenylyl)-L-seryl-[protein] + diphosphate. The enzyme catalyses L-threonyl-[protein] + ATP = 3-O-(5'-adenylyl)-L-threonyl-[protein] + diphosphate. It carries out the reaction L-tyrosyl-[protein] + ATP = O-(5'-adenylyl)-L-tyrosyl-[protein] + diphosphate. The catalysed reaction is L-histidyl-[protein] + UTP = N(tele)-(5'-uridylyl)-L-histidyl-[protein] + diphosphate. It catalyses the reaction L-seryl-[protein] + UTP = O-(5'-uridylyl)-L-seryl-[protein] + diphosphate. The enzyme catalyses L-tyrosyl-[protein] + UTP = O-(5'-uridylyl)-L-tyrosyl-[protein] + diphosphate. Its function is as follows. Nucleotidyltransferase involved in the post-translational modification of proteins. It can catalyze the addition of adenosine monophosphate (AMP) or uridine monophosphate (UMP) to a protein, resulting in modifications known as AMPylation and UMPylation. This chain is Protein nucleotidyltransferase YdiU, found in Bradyrhizobium sp. (strain BTAi1 / ATCC BAA-1182).